Here is a 306-residue protein sequence, read N- to C-terminus: Palmitoyl-protein thioesterase 1 (306 aa).

Positions 1–27 are cleaved as a signal peptide; the sequence is MASPGCLWLLAVALLPWTCASRALQHL. A lipid anchor (S-palmitoyl cysteine; by ZDHHC3 and ZDHHC7) is attached at Cys-6. 3 cysteine pairs are disulfide-bonded: Cys-45/Cys-46, Cys-96/Cys-128, and Cys-152/Cys-160. The active site involves Ser-115. N-linked (GlcNAc...) asparagine glycans are attached at residues Asn-197, Asn-212, and Asn-232. Catalysis depends on residues Asp-233 and His-289.

This sequence belongs to the palmitoyl-protein thioesterase family. As to quaternary structure, interacts with CLN5. Interacts with ATP5F1A and ATP5F1B. In terms of processing, glycosylated.

The protein localises to the lysosome. The protein resides in the secreted. Its subcellular location is the golgi apparatus. It is found in the endoplasmic reticulum. The catalysed reaction is S-hexadecanoyl-L-cysteinyl-[protein] + H2O = L-cysteinyl-[protein] + hexadecanoate + H(+). It carries out the reaction hexadecanoyl-CoA + H2O = hexadecanoate + CoA + H(+). The enzyme catalyses S-hexadecanoyl-N-acetylcysteamine + H2O = N-acetylcysteamine + hexadecanoate + H(+). It catalyses the reaction S-hexadecanoyl-N-acetylcysteine methyl ester + H2O = N-acetylcysteine methyl ester + hexadecanoate + H(+). Its activity is regulated as follows. Palmitoylation reduces PPT1 enzymatic activity. Functionally, has thioesterase activity against fatty acid thioesters with 14 -18 carbons, including palmitoyl-CoA, S-palmitoyl-N-acetylcysteamine, and palmitoylated proteins. In contrast to PPT2, PPT1 can hydrolyze palmitoylated proteins and palmitoylcysteine. This is Palmitoyl-protein thioesterase 1 (PPT1) from Homo sapiens (Human).